The sequence spans 187 residues: ATP synthase subunit b, chloroplastic (187 aa).

The helical transmembrane segment at 34 to 56 threads the bilayer; sequence IINLSVVLGLVFTLGRNFLISLL.

The protein belongs to the ATPase B chain family. F-type ATPases have 2 components, F(1) - the catalytic core - and F(0) - the membrane proton channel. F(1) has five subunits: alpha(3), beta(3), gamma(1), delta(1), epsilon(1). F(0) has four main subunits: a(1), b(1), b'(1) and c(10-14). The alpha and beta chains form an alternating ring which encloses part of the gamma chain. F(1) is attached to F(0) by a central stalk formed by the gamma and epsilon chains, while a peripheral stalk is formed by the delta, b and b' chains.

It is found in the plastid. The protein localises to the chloroplast thylakoid membrane. In terms of biological role, f(1)F(0) ATP synthase produces ATP from ADP in the presence of a proton or sodium gradient. F-type ATPases consist of two structural domains, F(1) containing the extramembraneous catalytic core and F(0) containing the membrane proton channel, linked together by a central stalk and a peripheral stalk. During catalysis, ATP synthesis in the catalytic domain of F(1) is coupled via a rotary mechanism of the central stalk subunits to proton translocation. Component of the F(0) channel, it forms part of the peripheral stalk, linking F(1) to F(0). This chain is ATP synthase subunit b, chloroplastic, found in Pleurastrum terricola (Filamentous green alga).